Consider the following 387-residue polypeptide: Capsid protein (387 aa).

A compositionally biased stretch (basic residues) spans M1–K33. Disordered regions lie at residues M1–A47 and K365–N387. 2 short sequence motifs (nuclear localization signal) span residues P8–R15 and T30–D37. A compositionally biased stretch (low complexity) spans N370–A379.

The protein localises to the host nucleus. It is found in the virion. Its function is as follows. Self-assembles to form the virion icosahedral capsid. This Chaetoceros protobacilladnavirus 2 (Chaetoceros sp. DNA virus 7) protein is Capsid protein.